A 93-amino-acid polypeptide reads, in one-letter code: U12-lycotoxin-Ls1e (93 aa).

The N-terminal stretch at 1-18 is a signal peptide; it reads MKFAVILLFTLVVLAVAS. The propeptide occupies 19-38; the sequence is ESVEEDTREIDVEEFQEQQR.

The protein belongs to the neurotoxin 31 family. Contains 5 disulfide bonds. In terms of tissue distribution, expressed by the venom gland.

The protein localises to the secreted. The polypeptide is U12-lycotoxin-Ls1e (Lycosa singoriensis (Wolf spider)).